Here is a 391-residue protein sequence, read N- to C-terminus: Elongation factor Tu (391 aa).

Residues 10–201 enclose the tr-type G domain; the sequence is KPHVNIGTIG…AVDDYIPTPA (192 aa). Residues 19–26 form a G1 region; the sequence is GHVDHGKT. 19 to 26 is a GTP binding site; it reads GHVDHGKT. Threonine 26 contributes to the Mg(2+) binding site. The tract at residues 55–59 is G2; the sequence is GITIS. Residues 76–79 form a G3 region; it reads DCPG. Residues 76–80 and 131–134 contribute to the GTP site; these read DCPGH and NKVD. Residues 131–134 form a G4 region; it reads NKVD. The tract at residues 169 to 171 is G5; the sequence is SAL.

The protein belongs to the TRAFAC class translation factor GTPase superfamily. Classic translation factor GTPase family. EF-Tu/EF-1A subfamily. Monomer.

The protein resides in the cytoplasm. It carries out the reaction GTP + H2O = GDP + phosphate + H(+). In terms of biological role, GTP hydrolase that promotes the GTP-dependent binding of aminoacyl-tRNA to the A-site of ribosomes during protein biosynthesis. The sequence is that of Elongation factor Tu from Dinoroseobacter shibae (strain DSM 16493 / NCIMB 14021 / DFL 12).